Consider the following 404-residue polypeptide: Endophilin-B2 (404 aa).

An N-acetylmethionine modification is found at Met1. A membrane-binding amphipathic helix region spans residues Met1–Phe27. Ser10 bears the Phosphoserine mark. Residues Glu24–Pro291 enclose the BAR domain. Residues Ser209–Thr239 adopt a coiled-coil conformation. Residues Ser344–Ser404 form the SH3 domain. Ser404 bears the Phosphoserine mark.

This sequence belongs to the endophilin family. Homodimer, and heterodimer with SH3GLB1.

It localises to the cytoplasm. The chain is Endophilin-B2 from Rattus norvegicus (Rat).